A 619-amino-acid chain; its full sequence is P-granule-associated protein deps-1 (619 aa).

Positions 62 to 101 (NFDNIEEAKNLERRSKIPLKFGEVILWNESDCDHDKRIIL) are required for prg-1 binding. 2 stretches are compositionally biased toward low complexity: residues 563-592 (SRAT…AATS) and 600-619 (GPSS…SSRV). The tract at residues 563–619 (SRATSARTTPAGSSIGSRSSIQSRASAATSVSSNRFVGPSSRRTPSGTPQSSTSSRV) is disordered.

Interacts (via N-terminus) with prg-1; the interaction is direct. May interact with edg-1. As to expression, expressed in germ cells.

It localises to the cytoplasmic granule. Its subcellular location is the cytoplasm. The protein localises to the perinuclear region. Its function is as follows. Component of P-granules which is required for P-granule formation and integrity in adult germ cells. Promotes the accumulation of glh-1 mRNA and localization of pgl-1 to P-granules. Involved in RNA-mediated gene silencing (RNAi) in the germline. In particular, it is required for piwi-interacting RNA (piRNA) gene silencing and positively regulates the formation of secondary 22G-RNAs, which are RNA-dependent RNA polymerase-derived endo-siRNAs, typically 22 nucleotides in length with a 5'guanosine residue. Its role in RNAi may also be through positively regulating the expression of the dsRNA-binding protein rde-4. Plays a role in small RNA-directed transgenerational epigenetic inheritance. The polypeptide is P-granule-associated protein deps-1 (Caenorhabditis elegans).